The primary structure comprises 350 residues: (RS)-norcoclaurine 6-O-methyltransferase (350 aa).

Residue Met166 coordinates S-adenosyl-L-methionine. Asp169 contacts substrate. Residues Thr170, Gly195, Asp218, 238-239 (DM), and Lys252 each bind S-adenosyl-L-methionine. Substrate is bound by residues 253–257 (CILHD) and Asp306. His256 serves as the catalytic Proton acceptor.

It belongs to the class I-like SAM-binding methyltransferase superfamily. Cation-independent O-methyltransferase family. COMT subfamily. In terms of assembly, homodimer. Expressed in leaf primordia of rhizomes and root endodermis.

It catalyses the reaction (S)-norcoclaurine + S-adenosyl-L-methionine = (S)-coclaurine + S-adenosyl-L-homocysteine + H(+). It carries out the reaction norcoclaurine + S-adenosyl-L-methionine = coclaurine + S-adenosyl-L-homocysteine + H(+). Inhibited by sanguinarine. Its function is as follows. Involved in the biosynthesis of coclaurine, a precursor of benzylisoquinoline alkaloids. Catalyzes the transfer of the S-methyl group of S-adenosyl-L-methionine (AdoMet) to the 6-hydroxyl group of norcoclaurine to form coclaurine. The chain is (RS)-norcoclaurine 6-O-methyltransferase from Thalictrum flavum subsp. glaucum (Yellow meadow rue).